We begin with the raw amino-acid sequence, 329 residues long: E3 ubiquitin-protein ligase SINA-like 4 (329 aa).

A compositionally biased stretch (basic and acidic residues) spans 1 to 12 (MTKLGRRNDGGG). Positions 1–58 (MTKLGRRNDGGGKSHRSSTKRQRRTSVSVDDPSPGEEEEKTLVVLTDDSDSEEDDKPL) are disordered. Residues 13–24 (KSHRSSTKRQRR) show a composition bias toward basic residues. The RING-type; degenerate zinc finger occupies 86 to 122 (CPNCFDPLKKPIFQCNNGHLACFLCCIKLKKRCSFCK). The tract at residues 136–325 (VIKAGLVSCS…MEISIGDKND (190 aa)) is SBD. The SIAH-type zinc-finger motif lies at 139-198 (AGLVSCSNAIYGCKQSTTYGNQLQSHEKVCVFAPCSCPIKDCNYIGFYKDLINHFRATHK). 8 residues coordinate Zn(2+): cysteine 144, cysteine 151, histidine 164, cysteine 168, cysteine 175, cysteine 180, histidine 192, and histidine 197.

This sequence belongs to the SINA (Seven in absentia) family.

The catalysed reaction is S-ubiquitinyl-[E2 ubiquitin-conjugating enzyme]-L-cysteine + [acceptor protein]-L-lysine = [E2 ubiquitin-conjugating enzyme]-L-cysteine + N(6)-ubiquitinyl-[acceptor protein]-L-lysine.. It functions in the pathway protein modification; protein ubiquitination. Its function is as follows. E3 ubiquitin-protein ligase that mediates ubiquitination and subsequent proteasomal degradation of target proteins. E3 ubiquitin ligases accept ubiquitin from an E2 ubiquitin-conjugating enzyme in the form of a thioester and then directly transfers the ubiquitin to targeted substrates. It probably triggers the ubiquitin-mediated degradation of different substrates. The chain is E3 ubiquitin-protein ligase SINA-like 4 from Arabidopsis thaliana (Mouse-ear cress).